A 660-amino-acid chain; its full sequence is Potassium voltage-gated channel subfamily KQT member 1 (660 aa).

The span at 1-18 shows a compositional bias: polar residues; the sequence is MSSEVKSRWSGSGSQKSG. A disordered region spans residues 1 to 67; the sequence is MSSEVKSRWS…PESRAADSRA (67 aa). Topologically, residues 1 to 113 are cytoplasmic; it reads MSSEVKSRWS…YNFLERPTGW (113 aa). Residues 53-67 show a composition bias toward basic and acidic residues; sequence STDKNPESRAADSRA. The chain crosses the membrane as a helical span at residues 114–135; it reads KCFIYHFTVFLIVLVCLIFSVM. The Extracellular segment spans residues 136-146; sequence STIEQYHYFAN. A helical membrane pass occupies residues 147–169; the sequence is RALVWMEIVLVVFFGTEYIVRLW. Over 170–185 the chain is Cytoplasmic; it reads SAGCRSKYVGFWGRLR. Residues 186–211 traverse the membrane as a helical segment; that stretch reads FARKPISIIDLIVVVASVIVLCVGSN. The Extracellular portion of the chain corresponds to 212–219; sequence GQVFATSA. Residues 220–235 form a helical; Voltage-sensor membrane-spanning segment; sequence IRGIRFLQILRMLHVD. Residues 236 to 253 lie on the Cytoplasmic side of the membrane; it reads RQGGTWRLLGSVVFIHRQ. Gln-237 contributes to the a 1,2-diacyl-sn-glycero-3-phospho-(1D-myo-inositol-4,5-bisphosphate) binding site. Residues 254 to 276 form a helical membrane-spanning segment; it reads ELITTLYIGFLGLIFSSYFVYLA. The Extracellular segment spans residues 277–292; it reads EKDAVDDSGSQQFGSY. The pore-forming intramembrane region spans 293 to 313; that stretch reads ADALWWGVVTVTTIGYGDKVP. The Extracellular portion of the chain corresponds to 314-315; it reads QT. A helical membrane pass occupies residues 316–341; that stretch reads WIGRTIASCFSVFAISFFALPAGILG. Topologically, residues 342–660 are cytoplasmic; sequence SGFALKVQQK…RKDQDNQPDL (319 aa). The interval 399–426 is disordered; the sequence is SPSPKTKKSVGKRKKLKTDKDNGLNSEK. The segment covering 403–415 has biased composition (basic residues); it reads KTKKSVGKRKKLK. The stretch at 579-615 forms a coiled coil; that stretch reads KNTIGARLNRVEEKFVHMDQKLNTITDMLHHLVAHQQ.

It belongs to the potassium channel family. KQT (TC 1.A.1.15) subfamily. Kv7.1/KCNQ1 sub-subfamily. As to quaternary structure, tetramer. Heterotetramer with KCNE1; targets to the membrane raft. Interacts (via C-terminus) with CALM; forms a heterotetramer in a calcium-independent manner. Interacts with KCNE2; form a heterooligomer complex that targets to the membrane raft and leading to currents with an apparently instantaneous activation, a rapid deactivation process and a linear current-voltage relationship and decreases the amplitude of the outward current. Interacts with KCNE3; four KCNE3 molecules are bound to one KCNQ1 tetramer (4:4 KCNQ1:KCNE3 stoichiometry); alters membrane raft localization; affects KCNQ1 structure and gating properties. Interacts with KCNE4; impairs KCNQ1 localization in lipid rafts and inhibits voltage-gated potassium channel activity. Interacts with KCNE5; impairs KCNQ1 localization in lipid rafts and only conducts current upon strong and continued depolarization. In terms of tissue distribution, expressed only in rectal gland and heart. Faintly expressed in intestine. Undetectable in kidney, brain, testis, liver and gills.

Its subcellular location is the cell membrane. It is found in the cytoplasmic vesicle membrane. The protein resides in the membrane raft. The protein localises to the endoplasmic reticulum. It localises to the basolateral cell membrane. The enzyme catalyses K(+)(in) = K(+)(out). With respect to regulation, PIP2 molecule is essential to activate KCNQ channels by inducing the coupling of the voltage-sensing domain (VSD) and the pore-forming domain (PD). Upon channel activation, PIP2 disrupts the VSD-calmodulin/CALM interactions, causing the release of CALM from the VSD which triggers the opening of the gate. Calcium potentiates KCNQ1 channel current through calcium-bound CALM. Calcium-bound CALM competes with PIP2 to stabilize the channel open state. In terms of biological role, pore-forming subunit of the voltage-gated potassium (Kv) channel involved in the regulation of cardiomyocyte excitability and important in normal development and functions of myocardium, inner ear, stomach and colon. Associates with KCNE beta subunits that modulates current kinetics. Induces a voltage-dependent by rapidly activating and slowly deactivating potassium-selective outward current. Also promotes a delayed voltage activated potassium current showing outward rectification characteristic. During beta-adrenergic receptor stimulation participates in cardiac repolarization by associating with KCNE1 to form the I(Ks) cardiac potassium current that increases the amplitude and slows down the activation kinetics of outward potassium current I(Ks). When associated with KCNE3, forms the potassium channel that is important for cyclic AMP-stimulated intestinal secretion of chloride ions. When associated with KCNE2, forms a heterooligomer complex leading to currents with an apparently instantaneous activation, a rapid deactivation process and a linear current-voltage relationship and decreases the amplitude of the outward current. When associated with KCNE4, inhibits voltage-gated potassium channel activity. When associated with KCNE5, this complex only conducts current upon strong and continued depolarization. The chain is Potassium voltage-gated channel subfamily KQT member 1 from Squalus acanthias (Spiny dogfish).